The primary structure comprises 588 residues: uncharacterized protein (588 aa).

7 helical membrane-spanning segments follow: residues 14–34, 49–69, 78–98, 184–204, 235–255, 257–274, and 275–292; these read FLLF…KGIV, AVIL…IVSA, IFLC…GILG, ALVV…LVAI, VPIA…AVIG, VISS…SYQE, and SSFY…SIYD. Ser486 bears the Phosphoserine mark. The segment at 566-588 is disordered; sequence RKGSVNGSDQESQKGVSRNVDIV. A compositionally biased stretch (polar residues) spans 570-581; sequence VNGSDQESQKGV.

The protein resides in the membrane. This is an uncharacterized protein from Arabidopsis thaliana (Mouse-ear cress).